The chain runs to 225 residues: Octanoyltransferase (225 aa).

The BPL/LPL catalytic domain occupies 31–214 (ENTCDEVWLV…ELTTLLDYTD (184 aa)). Substrate-binding positions include 70–77 (RGGQVTYH), 137–139 (SLG), and 150–152 (GLA). The active-site Acyl-thioester intermediate is Cys168.

Belongs to the LipB family.

The protein localises to the cytoplasm. The catalysed reaction is octanoyl-[ACP] + L-lysyl-[protein] = N(6)-octanoyl-L-lysyl-[protein] + holo-[ACP] + H(+). It functions in the pathway protein modification; protein lipoylation via endogenous pathway; protein N(6)-(lipoyl)lysine from octanoyl-[acyl-carrier-protein]: step 1/2. Its function is as follows. Catalyzes the transfer of endogenously produced octanoic acid from octanoyl-acyl-carrier-protein onto the lipoyl domains of lipoate-dependent enzymes. Lipoyl-ACP can also act as a substrate although octanoyl-ACP is likely to be the physiological substrate. The sequence is that of Octanoyltransferase from Aliivibrio fischeri (strain ATCC 700601 / ES114) (Vibrio fischeri).